Reading from the N-terminus, the 545-residue chain is High-molecular-weight cytochrome c (545 aa).

An N-terminal signal peptide occupies residues 1-31 (MRNGRTLLRWAGVLAATAIIGVGGFWSQGTT). Histidine 66, histidine 69, cysteine 80, cysteine 83, histidine 84, histidine 111, cysteine 114, cysteine 117, histidine 118, cysteine 135, cysteine 138, histidine 139, histidine 159, histidine 162, cysteine 178, cysteine 181, histidine 182, histidine 183, cysteine 202, cysteine 205, histidine 206, histidine 222, cysteine 225, cysteine 228, histidine 229, cysteine 244, cysteine 247, histidine 248, histidine 298, histidine 301, cysteine 308, cysteine 311, histidine 312, histidine 313, cysteine 319, cysteine 322, histidine 323, histidine 341, cysteine 349, cysteine 352, histidine 353, cysteine 362, cysteine 365, histidine 366, cysteine 378, cysteine 381, histidine 382, histidine 449, histidine 470, cysteine 477, cysteine 480, histidine 481, histidine 482, cysteine 493, cysteine 496, histidine 497, histidine 516, cysteine 519, cysteine 522, histidine 523, cysteine 536, cysteine 539, and histidine 540 together coordinate heme c.

As to quaternary structure, monomer. Binds 16 heme c groups per subunit. High-spin heme 15 has single axial histidine ligand and the other hemes are low-spin bis-histidinyl coordinated.

It is found in the periplasm. HMWC (high-molecular-weight cytochrome c), ORF2, ORF3, ORF4, ORF5 and ORF6 in the HMC operon form a transmembrane protein complex that allows electron flow from the periplasmic hydrogenase to the cytoplasmic enzymes that catalyze reduction of sulfates. This chain is High-molecular-weight cytochrome c (hmcA), found in Nitratidesulfovibrio vulgaris (strain ATCC 29579 / DSM 644 / CCUG 34227 / NCIMB 8303 / VKM B-1760 / Hildenborough) (Desulfovibrio vulgaris).